The sequence spans 388 residues: Succinate--CoA ligase [ADP-forming] subunit beta (388 aa).

The 236-residue stretch at 9-244 folds into the ATP-grasp domain; that stretch reads KEILRKYNVP…LDEEDANEIE (236 aa). ATP contacts are provided by residues Lys-46, 53-55, Glu-99, Ala-102, and Glu-107; that span reads GRG. Mg(2+) is bound by residues Asn-199 and Asp-213. Substrate contacts are provided by residues Asn-264 and 321–323; that span reads GIM.

This sequence belongs to the succinate/malate CoA ligase beta subunit family. As to quaternary structure, heterotetramer of two alpha and two beta subunits. The cofactor is Mg(2+).

It carries out the reaction succinate + ATP + CoA = succinyl-CoA + ADP + phosphate. It catalyses the reaction GTP + succinate + CoA = succinyl-CoA + GDP + phosphate. Its pathway is carbohydrate metabolism; tricarboxylic acid cycle; succinate from succinyl-CoA (ligase route): step 1/1. Succinyl-CoA synthetase functions in the citric acid cycle (TCA), coupling the hydrolysis of succinyl-CoA to the synthesis of either ATP or GTP and thus represents the only step of substrate-level phosphorylation in the TCA. The beta subunit provides nucleotide specificity of the enzyme and binds the substrate succinate, while the binding sites for coenzyme A and phosphate are found in the alpha subunit. This is Succinate--CoA ligase [ADP-forming] subunit beta from Ralstonia nicotianae (strain ATCC BAA-1114 / GMI1000) (Ralstonia solanacearum).